Reading from the N-terminus, the 395-residue chain is S-adenosylmethionine synthase (395 aa).

His16 serves as a coordination point for ATP. Position 18 (Asp18) interacts with Mg(2+). Glu44 contributes to the K(+) binding site. 2 residues coordinate L-methionine: Glu57 and Gln100. A flexible loop region spans residues 100-110 (QSPDIAQGVDR). ATP contacts are provided by residues 167–169 (DAK), 233–234 (RF), Asp242, 248–249 (RK), Ala265, and Lys269. Asp242 provides a ligand contact to L-methionine. Lys273 serves as a coordination point for L-methionine.

It belongs to the AdoMet synthase family. As to quaternary structure, homotetramer; dimer of dimers. Mg(2+) is required as a cofactor. It depends on K(+) as a cofactor.

The protein resides in the cytoplasm. It carries out the reaction L-methionine + ATP + H2O = S-adenosyl-L-methionine + phosphate + diphosphate. Its pathway is amino-acid biosynthesis; S-adenosyl-L-methionine biosynthesis; S-adenosyl-L-methionine from L-methionine: step 1/1. Catalyzes the formation of S-adenosylmethionine (AdoMet) from methionine and ATP. The overall synthetic reaction is composed of two sequential steps, AdoMet formation and the subsequent tripolyphosphate hydrolysis which occurs prior to release of AdoMet from the enzyme. The sequence is that of S-adenosylmethionine synthase from Burkholderia vietnamiensis (strain G4 / LMG 22486) (Burkholderia cepacia (strain R1808)).